We begin with the raw amino-acid sequence, 405 residues long: Argininosuccinate synthase (405 aa).

ATP-binding positions include 10-18 and Ala37; that span reads AYSGGLDTS. Residues Tyr88 and Ser93 each coordinate L-citrulline. Gly118 is an ATP binding site. Residues Thr120, Asn124, and Asp125 each contribute to the L-aspartate site. An L-citrulline-binding site is contributed by Asn124. Residues Arg128, Ser179, Ser188, Glu264, and Tyr276 each coordinate L-citrulline.

This sequence belongs to the argininosuccinate synthase family. Type 1 subfamily. As to quaternary structure, homotetramer.

It is found in the cytoplasm. The enzyme catalyses L-citrulline + L-aspartate + ATP = 2-(N(omega)-L-arginino)succinate + AMP + diphosphate + H(+). It functions in the pathway amino-acid biosynthesis; L-arginine biosynthesis; L-arginine from L-ornithine and carbamoyl phosphate: step 2/3. The chain is Argininosuccinate synthase from Nitrosococcus oceani (strain ATCC 19707 / BCRC 17464 / JCM 30415 / NCIMB 11848 / C-107).